The following is a 124-amino-acid chain: Small ribosomal subunit protein eS6 (124 aa).

It belongs to the eukaryotic ribosomal protein eS6 family.

The chain is Small ribosomal subunit protein eS6 from Methanococcus maripaludis (strain DSM 14266 / JCM 13030 / NBRC 101832 / S2 / LL).